Here is a 506-residue protein sequence, read N- to C-terminus: AMP phosphorylase (506 aa).

AMP contacts are provided by residues Gly-168, 194 to 199 (SRAITG), and Thr-203. The Proton donor role is filled by Asp-256. Positions 264 and 288 each coordinate AMP.

Belongs to the thymidine/pyrimidine-nucleoside phosphorylase family. Type 2 subfamily.

It catalyses the reaction AMP + phosphate = alpha-D-ribose 1,5-bisphosphate + adenine. It carries out the reaction CMP + phosphate = cytosine + alpha-D-ribose 1,5-bisphosphate. The enzyme catalyses UMP + phosphate = alpha-D-ribose 1,5-bisphosphate + uracil. In terms of biological role, catalyzes the conversion of AMP and phosphate to adenine and ribose 1,5-bisphosphate (R15P). Exhibits phosphorylase activity toward CMP and UMP in addition to AMP. Functions in an archaeal AMP degradation pathway, together with R15P isomerase and RubisCO. This is AMP phosphorylase from Methanococcoides burtonii (strain DSM 6242 / NBRC 107633 / OCM 468 / ACE-M).